A 449-amino-acid chain; its full sequence is Adenylosuccinate synthetase (449 aa).

Residues 12-18 (GDEGKGK) and 40-42 (GHT) each bind GTP. The active-site Proton acceptor is the D13. Residues D13 and G40 each coordinate Mg(2+). IMP contacts are provided by residues 13-16 (DEGK), 38-41 (NAGH), T128, R142, Q223, T238, and R302. H41 functions as the Proton donor in the catalytic mechanism. Residue 298 to 304 (TTTGRQR) coordinates substrate. Residues R304, 330 to 332 (KLD), and 412 to 414 (SLG) contribute to the GTP site.

The protein belongs to the adenylosuccinate synthetase family. In terms of assembly, homodimer. Mg(2+) is required as a cofactor.

The protein localises to the cytoplasm. The enzyme catalyses IMP + L-aspartate + GTP = N(6)-(1,2-dicarboxyethyl)-AMP + GDP + phosphate + 2 H(+). It participates in purine metabolism; AMP biosynthesis via de novo pathway; AMP from IMP: step 1/2. Plays an important role in the de novo pathway of purine nucleotide biosynthesis. Catalyzes the first committed step in the biosynthesis of AMP from IMP. In Synechococcus sp. (strain JA-2-3B'a(2-13)) (Cyanobacteria bacterium Yellowstone B-Prime), this protein is Adenylosuccinate synthetase.